A 710-amino-acid chain; its full sequence is Iron-sulfur clusters transporter ATM1, mitochondrial (710 aa).

Residues 1–38 (MWLSLPRSGYGSVATLTSKRVLACLTPLRQFSTSPAVS) constitute a mitochondrion transit peptide. Polar residues predominate over residues 35 to 52 (PAVSNANHKNVDNINKSP). The disordered stretch occupies residues 35 to 83 (PAVSNANHKNVDNINKSPANDAANNAVEKGDKPTTSPEKLATKAEKSSA). At 39–129 (NANHKNVDNI…PKGKTSVKFR (91 aa)) the chain is on the mitochondrial matrix side. Residues 130-151 (VLVAVALLVGAKLLNVQVPFFF) traverse the membrane as a helical segment. The region spanning 130-419 (VLVAVALLVG…LGSVYRDLRQ (290 aa)) is the ABC transmembrane type-1 domain. Residues 152–173 (KEIIDDMNIEWNSATALGVGIT) are Mitochondrial intermembrane-facing. Residues 174-197 (ALIFSYGAARFGAVLFGELRNAIF) form a helical membrane-spanning segment. At 198 to 246 (ASVAQKAIKEVATNVFRHLLKLDMAFHLSRQTGGITRAIDRGTKGISFV) the chain is on the mitochondrial matrix side. Residues 247 to 270 (LSSMVFHIIPIALEISLVCGILSY) form a helical membrane-spanning segment. Asn-271 is a topological domain (mitochondrial intermembrane). Residues 272-292 (FGWKYALVTGATMVSYAIFTI) form a helical membrane-spanning segment. Residues 293-358 (TTTSWRTKFR…ASIKIATSLA (66 aa)) lie on the Mitochondrial matrix side of the membrane. Residues 298–302 (RTKFR) and 361–364 (NSGQ) contribute to the glutathione site. The chain crosses the membrane as a helical span at residues 359-377 (FLNSGQNLIFSSALTAMMY). The Mitochondrial intermembrane portion of the chain corresponds to 378–392 (MTCCGVADGSLTVGD). Residues 393-414 (LVLVNQLVFQLSVPLNFLGSVY) traverse the membrane as a helical segment. Gly-411 is a binding site for glutathione. At 415 to 710 (RDLRQSLLDM…AEEKAAKKDV (296 aa)) the chain is on the mitochondrial matrix side. In terms of domain architecture, ABC transporter spans 453-687 (IRFENVTYGY…DGLYKSMWDA (235 aa)). ATP is bound by residues Tyr-462 and 486–497 (GPSGSGKSTILK).

This sequence belongs to the ABC transporter superfamily. ABCB family. Heavy Metal importer (TC 3.A.1.210) subfamily. Homodimer.

The protein resides in the mitochondrion inner membrane. Functionally, performs an essential function in the generation of cytoplasmic iron-sulfur proteins by mediating the ATP-dependent export of Fe/S cluster precursors synthesized by NFS1 and other mitochondrial proteins. Hydrolyzes ATP. Binds glutathione and may function by transporting a glutathione-conjugated iron-sulfur compound. The sequence is that of Iron-sulfur clusters transporter ATM1, mitochondrial from Yarrowia lipolytica (strain CLIB 122 / E 150) (Yeast).